The sequence spans 173 residues: MAGALRRTMVYLGLAESDDEYISDETPRPRDTPQSAGGSSAAVSESGSTSVARRSPEYRAPVTPIKRAPSSREDENELRTITTVHPRSYNDAKSIGEAFRDGTPVIMNVSDMGEAEAKRLVDFAAGLVFALHGSIERVTAKVFLLTPSFVEVRDQGHSDDIDEEPASLEQVEG.

The disordered stretch occupies residues 17–85 (SDDEYISDET…NELRTITTVH (69 aa)). The segment covering 35–52 (SAGGSSAAVSESGSTSVA) has biased composition (low complexity).

The protein belongs to the SepF family. In terms of assembly, homodimer. Interacts with FtsZ.

The protein localises to the cytoplasm. Functionally, cell division protein that is part of the divisome complex and is recruited early to the Z-ring. Probably stimulates Z-ring formation, perhaps through the cross-linking of FtsZ protofilaments. Its function overlaps with FtsA. The chain is Cell division protein SepF from Kocuria rhizophila (strain ATCC 9341 / DSM 348 / NBRC 103217 / DC2201).